A 138-amino-acid chain; its full sequence is Large ribosomal subunit protein uL16 (138 aa).

Basic residues predominate over residues 1–13 (MLQPARRKYRKEQ). The segment at 1–22 (MLQPARRKYRKEQKGRNTGVAT) is disordered.

Belongs to the universal ribosomal protein uL16 family. As to quaternary structure, part of the 50S ribosomal subunit.

Binds 23S rRNA and is also seen to make contacts with the A and possibly P site tRNAs. This is Large ribosomal subunit protein uL16 from Polaromonas sp. (strain JS666 / ATCC BAA-500).